Here is a 324-residue protein sequence, read N- to C-terminus: tRNA pseudouridine synthase B (324 aa).

D49 acts as the Nucleophile in catalysis.

The protein belongs to the pseudouridine synthase TruB family. Type 1 subfamily.

The catalysed reaction is uridine(55) in tRNA = pseudouridine(55) in tRNA. Its function is as follows. Responsible for synthesis of pseudouridine from uracil-55 in the psi GC loop of transfer RNAs. The chain is tRNA pseudouridine synthase B from Tolumonas auensis (strain DSM 9187 / NBRC 110442 / TA 4).